We begin with the raw amino-acid sequence, 452 residues long: UDP-N-acetylmuramoylalanine--D-glutamate ligase (452 aa).

Residue 119–125 (GSNGKTT) participates in ATP binding.

Belongs to the MurCDEF family.

It is found in the cytoplasm. It carries out the reaction UDP-N-acetyl-alpha-D-muramoyl-L-alanine + D-glutamate + ATP = UDP-N-acetyl-alpha-D-muramoyl-L-alanyl-D-glutamate + ADP + phosphate + H(+). Its pathway is cell wall biogenesis; peptidoglycan biosynthesis. Its function is as follows. Cell wall formation. Catalyzes the addition of glutamate to the nucleotide precursor UDP-N-acetylmuramoyl-L-alanine (UMA). The polypeptide is UDP-N-acetylmuramoylalanine--D-glutamate ligase (Streptococcus pyogenes serotype M5 (strain Manfredo)).